The following is a 428-amino-acid chain: Adenylosuccinate synthetase (428 aa).

GTP is bound by residues 12-18 and 40-42; these read GDEGKGK and GHT. Aspartate 13 (proton acceptor) is an active-site residue. Residues aspartate 13 and glycine 40 each coordinate Mg(2+). IMP-binding positions include 13 to 16, 38 to 41, threonine 129, arginine 143, glutamine 224, threonine 239, and arginine 303; these read DEGK and NAGH. The Proton donor role is filled by histidine 41. Residue 299–305 participates in substrate binding; it reads VTTGRIR. GTP contacts are provided by residues arginine 305, 331–333, and 410–412; these read KVD and AYG.

Belongs to the adenylosuccinate synthetase family. In terms of assembly, homodimer. Mg(2+) is required as a cofactor.

It is found in the cytoplasm. The catalysed reaction is IMP + L-aspartate + GTP = N(6)-(1,2-dicarboxyethyl)-AMP + GDP + phosphate + 2 H(+). The protein operates within purine metabolism; AMP biosynthesis via de novo pathway; AMP from IMP: step 1/2. Its function is as follows. Plays an important role in the de novo pathway of purine nucleotide biosynthesis. Catalyzes the first committed step in the biosynthesis of AMP from IMP. This chain is Adenylosuccinate synthetase, found in Francisella tularensis subsp. novicida (strain U112).